Here is a 297-residue protein sequence, read N- to C-terminus: ATP synthase gamma chain (297 aa).

It belongs to the ATPase gamma chain family. As to quaternary structure, F-type ATPases have 2 components, CF(1) - the catalytic core - and CF(0) - the membrane proton channel. CF(1) has five subunits: alpha(3), beta(3), gamma(1), delta(1), epsilon(1). CF(0) has three main subunits: a, b and c.

It is found in the cell membrane. Its function is as follows. Produces ATP from ADP in the presence of a proton gradient across the membrane. The gamma chain is believed to be important in regulating ATPase activity and the flow of protons through the CF(0) complex. This Renibacterium salmoninarum (strain ATCC 33209 / DSM 20767 / JCM 11484 / NBRC 15589 / NCIMB 2235) protein is ATP synthase gamma chain.